The following is a 492-amino-acid chain: Cell death protein 6 (492 aa).

The span at 19-29 (GNNINGEGSSS) shows a compositional bias: low complexity. Residues 19–38 (GNNINGEGSSSPSTSAPQVK) are disordered. One can recognise a PID domain in the interval 55-215 (INGHVEYVAR…YILKKKIVEL (161 aa)). 2 disordered regions span residues 241–385 (TGPP…STAA) and 464–492 (TGDL…NLKQ). The segment covering 244–268 (PIYPGLGPPALPLSPMPQGPPPNIP) has biased composition (pro residues). The span at 300-312 (ASPSVSPASTSPS) shows a compositional bias: low complexity. Over residues 313–333 (GPAPSIPPPRPPALAPPPPVA) the composition is skewed to pro residues. The span at 373-383 (FDPRAGEKKST) shows a compositional bias: basic and acidic residues.

This sequence belongs to the ced-6 family. Homodimer. Interacts with ced-1. Interacts with E3 ubiquitin-protein ligase trim-21. As to expression, detected in gonadal sheath cells.

The protein resides in the cytoplasm. Its function is as follows. May function as an adapter protein in a pathway that mediates recognition and phagocytosis of apoptotic cells during normal development. Promotes engulfment of cells at both early and late stages of apoptosis. Required for actin reorganization around apoptotic cells. Plays a role in protecting dopaminergic neurons from oxidative stress-induced degeneration. Mediates recruitment of E3 ubiquitin-protein ligase trim-21 to the apoptotic cell surface which promotes ubiquitination and degradation of ced-1. The protein is Cell death protein 6 of Caenorhabditis elegans.